We begin with the raw amino-acid sequence, 421 residues long: Histidine--tRNA ligase (421 aa).

This sequence belongs to the class-II aminoacyl-tRNA synthetase family. As to quaternary structure, homodimer.

Its subcellular location is the cytoplasm. It catalyses the reaction tRNA(His) + L-histidine + ATP = L-histidyl-tRNA(His) + AMP + diphosphate + H(+). In Solidesulfovibrio magneticus (strain ATCC 700980 / DSM 13731 / RS-1) (Desulfovibrio magneticus), this protein is Histidine--tRNA ligase.